The sequence spans 590 residues: Arginine--tRNA ligase (590 aa).

Positions 130–140 (ANPTGPMHVGH) match the 'HIGH' region motif.

This sequence belongs to the class-I aminoacyl-tRNA synthetase family. In terms of assembly, monomer.

Its subcellular location is the cytoplasm. The enzyme catalyses tRNA(Arg) + L-arginine + ATP = L-arginyl-tRNA(Arg) + AMP + diphosphate. In Methylobacterium nodulans (strain LMG 21967 / CNCM I-2342 / ORS 2060), this protein is Arginine--tRNA ligase.